The sequence spans 544 residues: Cannabidiolic acid synthase (544 aa).

A signal peptide spans 1 to 28 (MKCSTFSFWFVCKIIFFFFSFNIQTSIA). Cys37 and Cys99 are joined by a disulfide. Asn45 and Asn65 each carry an N-linked (GlcNAc...) asparagine glycan. In terms of domain architecture, FAD-binding PCMH-type spans 77 to 251 (TTPKPLVIVT…VAWKIRLVAV (175 aa)). FAD is bound by residues 109 to 115 (TRSGGHD) and Ser120. Residues 114–176 (HDSEGMSYIS…ENLSLAAGYC (63 aa)) constitute a cross-link (6-(S-cysteinyl)-8alpha-(pros-histidyl)-FAD (His-Cys)). N-linked (GlcNAc...) asparagine glycosylation occurs at Asn168. FAD contacts are provided by residues Cys176, 180–184 (CAGGH), Tyr190, Glu236, and Ile241. Residue His291 coordinates cannabigerolate. N-linked (GlcNAc...) asparagine glycosylation is found at Asn296, Asn304, and Asn328. Cannabigerolate contacts are provided by Tyr416 and Glu441. 480–482 (YLN) is an FAD binding site. Tyr483 acts as the Proton acceptor in catalysis. N-linked (GlcNAc...) asparagine glycosylation occurs at Asn498.

This sequence belongs to the oxygen-dependent FAD-linked oxidoreductase family. As to quaternary structure, monomer. FAD serves as cofactor. Post-translationally, glycosylated. The FAD cofactor is bound via a bicovalent 6-S-cysteinyl, 8alpha-N1-histidyl FAD linkage. As to expression, expressed in young leaves.

The protein localises to the secreted. It localises to the extracellular space. Its subcellular location is the apoplast. The enzyme catalyses cannabigerolate + O2 = cannabidiolate + H2O2. The protein operates within secondary metabolite biosynthesis; terpenoid biosynthesis. Its activity is regulated as follows. Inhibited by Hg(2+). Its function is as follows. Oxidoreductase involved in the biosynthesis of cannabinoids-related terpenophenolic natural products, which have pharmacological activity. Catalyzes the stereoselective oxidative cyclization of the monoterpene moiety in cannabigerolic acid (CBGA), producing cannabidiolate (CBDA), the major cannabioid in fiber-type Cannabis plants. Can also use cannabinerolic acid as substrate, but not cannabigerol or cannabinerol. In Cannabis sativa (Hemp), this protein is Cannabidiolic acid synthase.